Consider the following 288-residue polypeptide: Small ribosomal subunit protein uS3 (288 aa).

The KH type-2 domain occupies 38–106 (IRRMMSKGLE…QVQLNIIEVK (69 aa)). The interval 209 to 288 (PGRETPAEAP…TQPAETQQEG (80 aa)) is disordered. Positions 219-232 (SRPRRERGDRSERP) are enriched in basic and acidic residues. Residues 249–264 (AGRAAATTIAQAAETP) show a composition bias toward low complexity. A compositionally biased stretch (polar residues) spans 277-288 (AATQPAETQQEG).

This sequence belongs to the universal ribosomal protein uS3 family. As to quaternary structure, part of the 30S ribosomal subunit. Forms a tight complex with proteins S10 and S14.

Binds the lower part of the 30S subunit head. Binds mRNA in the 70S ribosome, positioning it for translation. The protein is Small ribosomal subunit protein uS3 of Salinispora tropica (strain ATCC BAA-916 / DSM 44818 / JCM 13857 / NBRC 105044 / CNB-440).